The following is a 199-amino-acid chain: Recombination protein RecR (199 aa).

A C4-type zinc finger spans residues 57–72 (CQSCRTFTEQDLCPIC). Residues 81–176 (GIICVVETPA…VISRIAHGVP (96 aa)) form the Toprim domain.

The protein belongs to the RecR family.

May play a role in DNA repair. It seems to be involved in an RecBC-independent recombinational process of DNA repair. It may act with RecF and RecO. This chain is Recombination protein RecR, found in Shewanella frigidimarina (strain NCIMB 400).